The primary structure comprises 30 residues: Varv peptide B (30 aa).

Residues 1 to 30 constitute a cross-link (cyclopeptide (Gly-Asn)); that stretch reads GLPVCGETCFGGTCNTPGCSCDPWPMCSRN. Intrachain disulfides connect Cys-5-Cys-19, Cys-9-Cys-21, and Cys-14-Cys-27.

Post-translationally, this is a cyclic peptide.

In terms of biological role, probably participates in a plant defense mechanism. The polypeptide is Varv peptide B (Viola arvensis (European field pansy)).